Consider the following 449-residue polypeptide: Trigger factor (449 aa).

One can recognise a PPIase FKBP-type domain in the interval 174-261 (GDIAVVGFKG…LKDLKTRELP (88 aa)). The tract at residues 430–449 (ENSTVTEKAPDKDKPSVTDA) is disordered. Over residues 437–449 (KAPDKDKPSVTDA) the composition is skewed to basic and acidic residues.

This sequence belongs to the FKBP-type PPIase family. Tig subfamily.

The protein resides in the cytoplasm. The catalysed reaction is [protein]-peptidylproline (omega=180) = [protein]-peptidylproline (omega=0). Its function is as follows. Involved in protein export. Acts as a chaperone by maintaining the newly synthesized protein in an open conformation. Functions as a peptidyl-prolyl cis-trans isomerase. This chain is Trigger factor, found in Synechococcus sp. (strain CC9311).